Consider the following 116-residue polypeptide: Large ribosomal subunit protein uL18 (116 aa).

This sequence belongs to the universal ribosomal protein uL18 family. As to quaternary structure, part of the 50S ribosomal subunit; part of the 5S rRNA/L5/L18/L25 subcomplex. Contacts the 5S and 23S rRNAs.

In terms of biological role, this is one of the proteins that bind and probably mediate the attachment of the 5S RNA into the large ribosomal subunit, where it forms part of the central protuberance. This chain is Large ribosomal subunit protein uL18, found in Alcanivorax borkumensis (strain ATCC 700651 / DSM 11573 / NCIMB 13689 / SK2).